The following is a 1819-amino-acid chain: MAPKAGKTKPHKSKGEKKKKEEKVLPTVIEISVETPDESQVTLKGISTDRILDVRKLLAVHVQTCHFTNFSLSHQVRGTKLKDSVDIVSLKPCHLTIVEEDYTEEQATAHIRRLLDIVACTTAFGPSKPPVSRTLPKDSEKKESGSTDGDSPTEKDAGDSNSGLSPKPKESEKKSVGACEAQSAEGAAKSDIDMCPPTRLGQFYEFFSFSYLTPPIQYIRRSVRPSKEDKGLDDLFQIDIKVSSGKPFTVVASRTGFYPPGKQQLLCHSLVELLQQISRPFDAAYDALMKAFIEHNKFGNLPYGFRANTWVVPPVVADSPSTFPSLPVEDETWGGDGGGVGRSGKYDKRKWAKEFAILAAMPCKTPEERQVRDRKAFLLHSLFVDVSVFKAVEIIKKIVENNQCSLKDPAALGFHEERIGDLIVRVARDDPDASAKLDRKSDGTQVLEISQEELAQRNLLKGITADESATVHDTSTLGVVVVRHCGCTAIVKVASEFKLNDGHILQDIDIEDQSEGGANALNVNSLRTLLHKSSTPSSLAQRSPNADSEQIRVAKSLVRKVIEDSLKKLEIEPSRYSKPIRWELGACWVQHLQNQASSKSESKKTEDPKPEPAVKGLGKQGALLKEIKRKIDVKANKTEQGKEAPANDTDNTSETEDQKELEKQNEEIEKMWKELVTETAYQRLKESETGFHLKSPKELIEMARKYYTDTALPKLVADFGSLELSPVDGRTLTDFMHTRGLQMHSLGRVVELAEKLPHVQSLCVHEMIVRAYKHILQAVVAAVENTADVATSIATCLNVLLGTPSDTESVYDEKIKWTWVETFISKRFGWDWKHEGCQELRKFSILRGLSHKVGLELVPKDYEMDTSYPFKKFDIISMVPVYKHVACSSADGRTLLESSKTSLDKGKLEDAVNYGTKALAKLVAVCGPYHRMTAGAYSLLAVVLYHTGDFNQATIYQQKALDINERELGLDHPDTMKSYGDLAVFYYRLQHTELALKYVNRALYLLHLTCGPSHPNTAATYINVAMMEEGMKNAHVALRYLHEALKCNQRLLGADHIQTAASYHAIAIALSLMDAYSLSVQHEQTTLQILQAKLGPEDLRTQDAAAWLEYFESKALEQQEAARNGTPKPDASISSKGHLSVSDLLDYITPDSGIKARDAQRKARPKVKGKPGQSPGPVSEENQKDDEILSPAHLTGESSSDKENKSETKSEEKKVENFDLEQSKPQDQLKLVKPEATVHEDDDSDEGWQEAVPKNRFSSGRRTRPSLAKLNTNFMNVTQQPSRSRGKSTNFTSPRTSSNELSISVAGSTSSPASKMFVKSPLNKKQNNSSVVGERPVNDKSALASSACTEQINKPTPMLSPVSVKAGKLFSYKEVALAPPGTIVKIVAEQLPEETKAPQNLDAAKIAVDGPEKVNAQDAESENKHVATETEAENTDCNEQGRVVVGGSELTSSPKEIKNVEVEKAAEKAFPIETAVSNARPGKSKSAQMAEDSDTCLLNKSPTANDSNGSESVIGVKLQKDLCDAELKTVDGETENLPNGDSSPKSSVAADGEKQDACEAQKEMSKKLSASAPPYTPTTIPIFGSIAVPGFKDHGGILPSPLNMPPMLPINHVRRSTPHQSVTARVPYGPRLSGGGYNRSGNRVPRNKPSFPNSTESNGEANQFNGPRIMNPHAAEFIPSQPWVSNGYPVSPNGYLASPNGAEITQNGYPLSPVAGGYPCNMSVTQPQDGLVSEELPGAGSSEEKSGSEEESNNDKNAGEDDEAVGQETTDTPENGHSTVGEVETTSHETCDEKNGERQGGKCWGDYSDNEIEQIEVTS.

Residues 1–17 show a composition bias toward basic residues; sequence MAPKAGKTKPHKSKGEK. Disordered regions lie at residues 1-23, 128-180, 595-619, and 634-664; these read MAPKAGKTKPHKSKGEKKKKEEK, KPPV…GACE, QASSKSESKKTEDPKPEPAVKGLGK, and KANKTEQGKEAPANDTDNTSETEDQKELEKQ. Composition is skewed to basic and acidic residues over residues 135 to 145 and 600 to 612; these read LPKDSEKKESG and SESKKTEDPKPEP. The Clu domain occupies 329–603; that stretch reads EDETWGGDGG…NQASSKSESK (275 aa). A coiled-coil region spans residues 649–680; the sequence is TDNTSETEDQKELEKQNEEIEKMWKELVTETA. TPR repeat units follow at residues 892 to 925, 934 to 967, 976 to 1009, 1018 to 1051, and 1060 to 1093; these read GRTLLESSKTSLDKGKLEDAVNYGTKALAKLVAV, AGAYSLLAVVLYHTGDFNQATIYQQKALDINERE, MKSYGDLAVFYYRLQHTELALKYVNRALYLLHLT, AATYINVAMMEEGMKNAHVALRYLHEALKCNQRL, and AASYHAIAIALSLMDAYSLSVQHEQTTLQILQAK. Disordered stretches follow at residues 1152–1360, 1413–1456, 1468–1513, 1527–1573, 1616–1670, and 1731–1809; these read SGIK…PMLS, KVNA…SPKE, KAFP…SESV, LKTV…ASAP, STPH…PRIM, and LVSE…DYSD. Basic and acidic residues-rich tracts occupy residues 1199-1224 and 1230-1239; these read SSDKENKSETKSEEKKVENFDLEQSK and KLVKPEATVH. Phosphoserine is present on Ser-1244. Residues 1269–1313 are compositionally biased toward polar residues; the sequence is KLNTNFMNVTQQPSRSRGKSTNFTSPRTSSNELSISVAGSTSSPA. Residue Ser-1320 is modified to Phosphoserine. The span at 1343–1354 shows a compositional bias: polar residues; the sequence is LASSACTEQINK. Polar residues-rich tracts occupy residues 1496–1511 and 1536–1546; these read CLLNKSPTANDSNGSE and NLPNGDSSPKS. Over residues 1551–1566 the composition is skewed to basic and acidic residues; sequence DGEKQDACEAQKEMSK. The span at 1650–1665 shows a compositional bias: polar residues; it reads SFPNSTESNGEANQFN. A compositionally biased stretch (basic and acidic residues) spans 1742–1759; sequence SEEKSGSEEESNNDKNAG. Residues 1767 to 1778 are compositionally biased toward polar residues; that stretch reads QETTDTPENGHS. The segment covering 1785–1800 has biased composition (basic and acidic residues); sequence TTSHETCDEKNGERQG.

Expressed in the non-epidermal tissues of the true leaves. Not detected in the vegetative shoot meristem and leaf primordia.

It localises to the nucleus. It is found in the cytoplasm. The protein resides in the cytosol. Its function is as follows. Negatively regulates meristematic tissue proliferation by integrating developmental signals with carbon source availability. May act as the scaffold of a protein complex, which sequesters key factors that are required for the G2 to M transition in meristematic tissues. Together with REC2, REC3 and FMT/CLU, contributes to the establishment of the cellular volume devoted to the chloroplast compartment. The chain is Protein REDUCED CHLOROPLAST COVERAGE 2 from Arabidopsis thaliana (Mouse-ear cress).